The primary structure comprises 228 residues: UPF0134 protein MPN_137 (228 aa).

Belongs to the UPF0134 family.

The sequence is that of UPF0134 protein MPN_137 from Mycoplasma pneumoniae (strain ATCC 29342 / M129 / Subtype 1) (Mycoplasmoides pneumoniae).